We begin with the raw amino-acid sequence, 131 residues long: Protein anoxia up-regulated (131 aa).

Residues 1–24 are compositionally biased toward polar residues; that stretch reads MVYESGFTTRRTYSSRPVTTSYAV. The tract at residues 1-121 is disordered; it reads MVYESGFTTR…STTSGNLPGG (121 aa). 2 stretches are compositionally biased toward low complexity: residues 44–53 and 98–116; these read SSDYSYTSKS and TSTT…TTSG.

In terms of tissue distribution, concentrated in lamina neurons, first optic lobe neurons and cortical neurons of central brain.

Plays an important role in the regulation of tissue responsiveness to oxygen deprivation. In Drosophila melanogaster (Fruit fly), this protein is Protein anoxia up-regulated.